The primary structure comprises 154 residues: MAEGNKAVDLTSLSLEQLSEVIKQLDSELEYLSTSYGQLGRAQLKFRECLANVNDAVRAENDGKEVLVPLTSSLYVPGKLNLGNSKLLVDIGTGYYVEKSAGEATEYYKRKCEYLASSIENLNNAIDAKSVQIRAVQNIMQQKATATTAATKSS.

Belongs to the prefoldin subunit alpha family. Heterohexamer of two PFD-alpha type and four PFD-beta type subunits. Interacts with byr1.

The protein localises to the cytoplasm. In terms of biological role, binds specifically to cytosolic chaperonin (c-CPN) and transfers target proteins to it. Binds to nascent polypeptide chain and promotes folding in an environment in which there are many competing pathways for nonnative proteins. Required for normal cytoskeletal function and when bound to byr1, is involved in the regulation of sexual differentiation. This is Probable prefoldin subunit 5 (bob1) from Schizosaccharomyces pombe (strain 972 / ATCC 24843) (Fission yeast).